Here is a 1083-residue protein sequence, read N- to C-terminus: MSSFVLDKEAFVRRVKRLYTEWRAPSIGHDDALRNLDCIMSIVGVEEDVMYSKSMALQLWLLGYELTDTISVFCSDAVYFLTSKKKIEFLKQTQNITEEGFPEINLLVRDRTDKDQGNFEKLIKALQNSKKGKRLGVFAKDAYPGEFSEAWKKSLTASKFEHVDISTIIAYLMCPKDESEINNIRKASLVSMDIFNKYLKDEIMDIIDSDRKVKHNKLSDGCEAAIGEKKYTSGLDPRLLDMAYPPIIQSGGAYSLKFSAVADKNPLHFGVIVCSLGARYKSYCSNISRTFLVNPTEAMQENYTFLVSVQEEILKLLVPGTKLCDVYEKTLDFVKKEKPSMVDNLPKSFGFAMGLEFRENSIVIGPKCQALLKKNMVFNLHVGISNLTNPEATDKEGKNYALFIGDTVLVGEQSPASVMTPSKKKIKNVGIFIKDDSDEEDVDDKKTAKEDQGTEILGRSKRNAVLESKLRNEINTEEKRKEHQRELAQQLNERAKDRLARQGNSKEVEKVRKNTVSYKSISQMPREPEVKELKLYVDKKYETVIMPVFGIQVPFHISTIKNISQSVEGEYTYLRINFFHPGATMGRNEGGLYPQPEATFVKEVTYRSSNVKEHGEVGAPSANLNNAFRLIKEVQKRFKTREAEEREKEDLVKQDTLILSQNKGNPKLKDLYIRPNIVTKRMTGSLEAHSNGFRYISVRGDKVDILYNNIKSAFFQPCDGEMIILLHFHLKYAIMFGKKKHVDVQFYTEVGEITTDLGKHQHMHDRDDLAAEQAERELRHKLKTAFKSFCEKVETMTKSVVEFDTPFRELGFPGAPFRSTVTLQPTSGSLVNLTEWPPFVITLDDVELVHFERVQFHLRNFDMIFVFKEYNKKVAMVNAIPMNMLDHVKEWLNSCDIRYSEGVQSLNWQKIMKTITDDPEGFFEQGGWTFLDPESGSEGENETAESEEDEAYNPTDAESDEESDEDSEYSEASEDSEESDEDLGSDEESGKDWSDLEREAAEEDRNHDYAADDKPRNGKFDSKKHGKSSKHSPSKSSKDKYNSRDKHHSSSSSGNKSSSKDKDRKRSRDDSRDNGHKSKKSRH.

Ser437 is modified (phosphoserine). A coiled-coil region spans residues 466–504 (LESKLRNEINTEEKRKEHQRELAQQLNERAKDRLARQGN). The segment at 923-1083 (FEQGGWTFLD…NGHKSKKSRH (161 aa)) is disordered. Residues 935–987 (SGSEGENETAESEEDEAYNPTDAESDEESDEDSEYSEASEDSEESDEDLGSDE) show a composition bias toward acidic residues. The segment covering 988–1023 (ESGKDWSDLEREAAEEDRNHDYAADDKPRNGKFDSK) has biased composition (basic and acidic residues). The segment covering 1024 to 1033 (KHGKSSKHSP) has biased composition (basic residues). Residues 1058-1076 (SSKDKDRKRSRDDSRDNGH) are compositionally biased toward basic and acidic residues.

Belongs to the peptidase M24 family. SPT16 subfamily. Component of the FACT complex, a stable heterodimer of dre4/spt16 and Ssrp. Interacts with TRL/GAGA.

It is found in the nucleus. It localises to the chromosome. Functionally, component of the FACT complex, a general chromatin factor that acts to reorganize nucleosomes. The FACT complex is involved in multiple processes that require DNA as a template such as mRNA elongation, DNA replication and DNA repair. During transcription elongation the FACT complex acts as a histone chaperone that both destabilizes and restores nucleosomal structure. It facilitates the passage of RNA polymerase II and transcription by promoting the dissociation of one histone H2A-H2B dimer from the nucleosome, then subsequently promotes the reestablishment of the nucleosome following the passage of RNA polymerase II. The FACT complex is required for expression of Hox genes. This chain is FACT complex subunit spt16 (dre4), found in Drosophila melanogaster (Fruit fly).